We begin with the raw amino-acid sequence, 299 residues long: Dye-decolorizing peroxidase YfeX (299 aa).

His215 is a heme binding site.

Belongs to the DyP-type peroxidase family. Requires heme b as cofactor.

It is found in the cytoplasm. Functionally, has both general peroxidase activity and dye-decolorizing activity. Can catalyze the oxidation of 2,2'-azino-bis(3-ethylbenzothiazoline-6-sulphonic acid) (ABTS), and the phenolic compounds guaiacol and catechol. Also decolorizes the anthraquinone dye reactive blue 19 (RB19). The polypeptide is Dye-decolorizing peroxidase YfeX (Escherichia coli O157:H7).